The chain runs to 264 residues: S-adenosylmethionine decarboxylase proenzyme (264 aa).

Ser113 (schiff-base intermediate with substrate; via pyruvic acid) is an active-site residue. Ser113 carries the post-translational modification Pyruvic acid (Ser); by autocatalysis. Catalysis depends on His118, which acts as the Proton acceptor; for processing activity. The Proton donor; for catalytic activity role is filled by Cys141.

Belongs to the prokaryotic AdoMetDC family. Type 2 subfamily. In terms of assembly, heterooctamer of four alpha and four beta chains arranged as a tetramer of alpha/beta heterodimers. Requires pyruvate as cofactor. Is synthesized initially as an inactive proenzyme. Formation of the active enzyme involves a self-maturation process in which the active site pyruvoyl group is generated from an internal serine residue via an autocatalytic post-translational modification. Two non-identical subunits are generated from the proenzyme in this reaction, and the pyruvate is formed at the N-terminus of the alpha chain, which is derived from the carboxyl end of the proenzyme. The post-translation cleavage follows an unusual pathway, termed non-hydrolytic serinolysis, in which the side chain hydroxyl group of the serine supplies its oxygen atom to form the C-terminus of the beta chain, while the remainder of the serine residue undergoes an oxidative deamination to produce ammonia and the pyruvoyl group blocking the N-terminus of the alpha chain.

The enzyme catalyses S-adenosyl-L-methionine + H(+) = S-adenosyl 3-(methylsulfanyl)propylamine + CO2. It functions in the pathway amine and polyamine biosynthesis; S-adenosylmethioninamine biosynthesis; S-adenosylmethioninamine from S-adenosyl-L-methionine: step 1/1. Its function is as follows. Catalyzes the decarboxylation of S-adenosylmethionine to S-adenosylmethioninamine (dcAdoMet), the propylamine donor required for the synthesis of the polyamines spermine and spermidine from the diamine putrescine. This is S-adenosylmethionine decarboxylase proenzyme from Stenotrophomonas maltophilia (strain R551-3).